Consider the following 148-residue polypeptide: MDFKNLQYESLSYIICNLQKNFKLYCEKCLKPYKLTNGLYFYLIYINKNRNCSLNDVSTEFEVDKAHTTRTISRLEQDGYIEKIQNPNDSRAFQLRVTDKGEEVLGDIKNIFSKWDNHIKKEFSDTEYKELVKNLHVVKDIKTAVEEE.

The HTH marR-type domain maps to 1 to 140 (MDFKNLQYES…LVKNLHVVKD (140 aa)). Positions 54–77 (LNDVSTEFEVDKAHTTRTISRLEQ) form a DNA-binding region, H-T-H motif.

In terms of biological role, transcription regulator that regulates expression of the bilirubin reductase operon (bilQ, bilR and bilS). This is HTH-type transcriptional regulator BilQ from Clostridioides difficile (strain CD3).